Reading from the N-terminus, the 222-residue chain is Large ribosomal subunit protein mL64 (222 aa).

2 disordered regions span residues 19–46 and 188–222; these read APGS…EDLL and KRLK…APSS. Residues 25-36 are compositionally biased toward basic residues; it reads YRARPPPRRRPG. The stretch at 99–212 forms a coiled coil; it reads MQESLRVKQL…AAALAAAVAQ (114 aa). The Nuclear localization signal signature appears at 184–200; that stretch reads KKERKRLKEEKQKRKKE. Low complexity predominate over residues 203–212; sequence AAALAAAVAQ.

Belongs to the mitochondrion-specific ribosomal protein mL64 family. As to quaternary structure, component of the mitochondrial large ribosomal subunit (mt-LSU). Mature mammalian 55S mitochondrial ribosomes consist of a small (28S) and a large (39S) subunit. The 28S small subunit contains a 12S ribosomal RNA (12S mt-rRNA) and 30 different proteins. The 39S large subunit contains a 16S rRNA (16S mt-rRNA), a copy of mitochondrial valine transfer RNA (mt-tRNA(Val)), which plays an integral structural role, and 52 different proteins. Interacts with GADD45A, GADD45B and GADD45G. Interacts with NR4A1 via the NR4A1 AB domain. Interacts with ATAD3A and ATAD3B. In terms of assembly, (Microbial infection) Interacts with the human papilloma virus type 16 (HPV 16) minor capsid protein L2. In terms of tissue distribution, widely expressed. Highly expressed in the thyroid gland, heart, lymph nodes, trachea and adrenal tissues. Expressed at lower level in liver skeletal muscle, kidney, pancreas, testis, ovary and stomach. Barely detectable in adrenal adenoma and papillary thyroid cancer.

It localises to the mitochondrion. The protein resides in the nucleus. Its function is as follows. Acts as a negative regulator of G1 to S cell cycle phase progression by inhibiting cyclin-dependent kinases. Inhibitory effects are additive with GADD45 proteins but also occur in the absence of GADD45 proteins. Acts as a repressor of the orphan nuclear receptor NR4A1 by inhibiting AB domain-mediated transcriptional activity. May be involved in the hormone-mediated regulation of NR4A1 transcriptional activity. May play a role in mitochondrial protein synthesis. This is Large ribosomal subunit protein mL64 (GADD45GIP1) from Homo sapiens (Human).